The sequence spans 335 residues: Serpentine receptor class alpha-25 (335 aa).

Transmembrane regions (helical) follow at residues 22 to 42 (IPVK…FYFA), 151 to 171 (LLII…YGVP), 195 to 215 (FRTV…YLSV), 245 to 265 (CILI…VNYI), and 280 to 300 (LAPF…VIYF).

Belongs to the nematode receptor-like protein sra family.

The protein localises to the membrane. The polypeptide is Serpentine receptor class alpha-25 (sra-25) (Caenorhabditis elegans).